The following is a 357-amino-acid chain: Membrane-bound lytic murein transglycosylase C (357 aa).

Residues 1-15 (MKKYLLLALLPFLYA) form the signal peptide. Cys-16 carries the N-palmitoyl cysteine lipid modification. Cys-16 carries S-diacylglycerol cysteine lipidation.

Belongs to the transglycosylase Slt family.

It is found in the cell outer membrane. It carries out the reaction Exolytic cleavage of the (1-&gt;4)-beta-glycosidic linkage between N-acetylmuramic acid (MurNAc) and N-acetylglucosamine (GlcNAc) residues in peptidoglycan, from either the reducing or the non-reducing ends of the peptidoglycan chains, with concomitant formation of a 1,6-anhydrobond in the MurNAc residue.. In terms of biological role, murein-degrading enzyme. May play a role in recycling of muropeptides during cell elongation and/or cell division. The sequence is that of Membrane-bound lytic murein transglycosylase C from Haemophilus influenzae (strain 86-028NP).